The following is a 118-amino-acid chain: Small ribosomal subunit protein uS13 (118 aa).

Positions 93 to 118 (RNLPVRGQRSKTNARTRKGPRKPIKR) are disordered.

This sequence belongs to the universal ribosomal protein uS13 family. As to quaternary structure, part of the 30S ribosomal subunit. Forms a loose heterodimer with protein S19. Forms two bridges to the 50S subunit in the 70S ribosome.

Located at the top of the head of the 30S subunit, it contacts several helices of the 16S rRNA. In the 70S ribosome it contacts the 23S rRNA (bridge B1a) and protein L5 of the 50S subunit (bridge B1b), connecting the 2 subunits; these bridges are implicated in subunit movement. Contacts the tRNAs in the A and P-sites. The sequence is that of Small ribosomal subunit protein uS13 from Saccharophagus degradans (strain 2-40 / ATCC 43961 / DSM 17024).